Reading from the N-terminus, the 214-residue chain is LexA repressor (214 aa).

The segment at residues Ile28–Arg48 is a DNA-binding region (H-T-H motif). Residues Ser133 and Lys172 each act as for autocatalytic cleavage activity in the active site.

The protein belongs to the peptidase S24 family. Homodimer.

The catalysed reaction is Hydrolysis of Ala-|-Gly bond in repressor LexA.. Represses a number of genes involved in the response to DNA damage (SOS response), including recA and lexA. In the presence of single-stranded DNA, RecA interacts with LexA causing an autocatalytic cleavage which disrupts the DNA-binding part of LexA, leading to derepression of the SOS regulon and eventually DNA repair. This chain is LexA repressor, found in Herpetosiphon aurantiacus (strain ATCC 23779 / DSM 785 / 114-95).